The sequence spans 157 residues: MAYTVSSANQLVYLGSVWADPLELQNLCTSALGNQFQTQQARTTVQQQFSDVWKTIPTATVRFPATGFKVFRYNAVLDSLVSALLGAFDTRNRIIEVENPQNPTTAETLDATRRVDDATVAIRASISNLMNELVRGTGMYNQALFESASGLTWATTP.

Ala2 bears the N-acetylalanine; by host mark.

Belongs to the virgaviridae capsid protein family.

The protein resides in the virion. Capsid protein self-assembles to form rod-shaped virions about 18 nm in diameter with a central canal enclosing the viral genomic RNA. In Vicia faba (Broad bean), this protein is Capsid protein (CP).